The following is an 89-amino-acid chain: Large ribosomal subunit protein uL23cz/uL23cy (89 aa).

The protein belongs to the universal ribosomal protein uL23 family. As to quaternary structure, part of the 50S ribosomal subunit.

The protein resides in the plastid. It is found in the chloroplast. Functionally, binds to 23S rRNA. The chain is Large ribosomal subunit protein uL23cz/uL23cy (rpl23-A) from Pelargonium hortorum (Common geranium).